The sequence spans 876 residues: Probable LRR receptor-like protein kinase At1g51890 (876 aa).

The first 19 residues, 1-19, serve as a signal peptide directing secretion; it reads MRFLSFLIFVFAVLGLVQA. Residues 20-500 are Extracellular-facing; sequence QDQSGFISLD…TGKNSTNVVA (481 aa). Asn45, Asn90, Asn138, Asn177, Asn251, Asn259, Asn284, Asn290, Asn327, Asn335, Asn397, Asn412, and Asn417 each carry an N-linked (GlcNAc...) asparagine glycan. 3 LRR repeats span residues 407-430, 431-453, and 455-476; these read QIIS…SKLT, HLRE…FSDM, and NLTL…ETLQ. 5 N-linked (GlcNAc...) asparagine glycosylation sites follow: Asn455, Asn460, Asn468, Asn481, and Asn494. The chain crosses the membrane as a helical span at residues 501 to 521; that stretch reads IAASVASVFAVLVILAIVFVV. The Cytoplasmic portion of the chain corresponds to 522–872; sequence IRKKQRTNEA…FSPSSASDFS (351 aa). Thr561 is subject to Phosphothreonine. The 273-residue stretch at 570–842 folds into the Protein kinase domain; sequence KNFERVLGKG…HVVMELNECL (273 aa). ATP is bound by residues 576 to 584 and Lys597; that span reads LGKGGFGTV. At Tyr642 the chain carries Phosphotyrosine. Asp694 functions as the Proton acceptor in the catalytic mechanism. Phosphothreonine occurs at positions 729 and 734. Tyr742 carries the phosphotyrosine modification.

It belongs to the protein kinase superfamily. Ser/Thr protein kinase family.

It is found in the cell membrane. It carries out the reaction L-seryl-[protein] + ATP = O-phospho-L-seryl-[protein] + ADP + H(+). The enzyme catalyses L-threonyl-[protein] + ATP = O-phospho-L-threonyl-[protein] + ADP + H(+). This Arabidopsis thaliana (Mouse-ear cress) protein is Probable LRR receptor-like protein kinase At1g51890.